The sequence spans 1368 residues: Kinesin-like protein KIF24 (1368 aa).

One can recognise an SAM domain in the interval 1–64 (MASWLYECLC…FQLIKIIKIM (64 aa)). Positions 89–112 (ELRSGPRRQLNFDSPADNKDRNAS) are disordered. Serine 102 and serine 112 each carry phosphoserine. In terms of domain architecture, Kinesin motor spans 223-546 (KIRVCVRKRP…LRYADRVKEL (324 aa)). Residue 313–320 (GQTGAGKT) coordinates ATP. Serine 478 is modified (phosphoserine). Positions 478–709 (SLLALKECIR…STKCKKVQTV (232 aa)) are interaction with MPHOSPH9. Positions 557–576 (TSRNRTSGNSSPKRIQSSPG) are enriched in polar residues. Disordered stretches follow at residues 557–584 (TSRNRTSGNSSPKRIQSSPGALSEDKCS) and 602–639 (GSTRGKVHPLTSHPPNIPFTSAPKVSGKRGGSRGSPSQ). Serine 584 is subject to Phosphoserine. The residue at position 621 (threonine 621) is a Phosphothreonine; by NEK2. Serine 622 carries the post-translational modification Phosphoserine; by NEK2. Serine 646 carries the post-translational modification Phosphoserine. Disordered regions lie at residues 651-670 (TVRSGHVAKKKPEESAPLCS), 729-753 (HRAEYSQDSQRGTPARPASEAWTNI), 792-849 (QYRP…NTLE), 864-938 (GPEK…LAEK), and 952-984 (RGGGSSFDLRKDASQSEVSGENEGNLPSPEEDG). The segment covering 819 to 830 (QVEELDDSDFSE) has biased composition (acidic residues). Residues serine 826 and serine 829 each carry the phosphoserine modification. 2 stretches are compositionally biased toward polar residues: residues 839-849 (QRATKQRNTLE) and 871-881 (ERQQSLFSSPR). Positions 882-906 (TGDKKDLTKSWVDSRDPINHRRAAL) are enriched in basic and acidic residues. A Phosphoserine modification is found at serine 1012. 2 disordered regions span residues 1054-1073 (MSLLENPDNEGSPPSEQLVQ) and 1086-1148 (GGPV…SREA). Residues 1106–1119 (SSATRHLWLSSSPP) are compositionally biased toward polar residues. Over residues 1138-1148 (HPADKLPSREA) the composition is skewed to basic and acidic residues.

It belongs to the TRAFAC class myosin-kinesin ATPase superfamily. Kinesin family. As to quaternary structure, interacts with CCP110, CEP97, TALPID3. Interacts with MPHOSPH9.

Its subcellular location is the cytoplasm. The protein resides in the cytoskeleton. It localises to the microtubule organizing center. The protein localises to the centrosome. It is found in the centriole. Functionally, microtubule-dependent motor protein that acts as a negative regulator of ciliogenesis by mediating recruitment of CCP110 to mother centriole in cycling cells, leading to restrict nucleation of cilia at centrioles. Mediates depolymerization of microtubules of centriolar origin, possibly to suppress aberrant cilia formation. Following activation by NEK2 involved in disassembly of primary cilium during G2/M phase but does not disassemble fully formed ciliary axonemes. As cilium assembly and disassembly is proposed to coexist in a dynamic equilibrium may suppress nascent cilium assembly and, potentially, ciliar re-assembly in cells that have already disassembled their cilia ensuring the completion of cilium removal in the later stages of the cell cycle. Plays an important role in recruiting MPHOSPH9, a negative regulator of cilia formation to the distal end of mother centriole. The sequence is that of Kinesin-like protein KIF24 (KIF24) from Homo sapiens (Human).